The chain runs to 283 residues: Gap junction alpha-6 protein (283 aa).

The Cytoplasmic segment spans residues methionine 1–lysine 23. The helical transmembrane segment at valine 24–isoleucine 41 threads the bilayer. Over glutamate 42–arginine 76 the chain is Extracellular. Residues leucine 77–valine 99 traverse the membrane as a helical segment. The Cytoplasmic portion of the chain corresponds to valine 100–arginine 150. Residues leucine 151 to glutamine 173 traverse the membrane as a helical segment. Residues tryptophan 174–isoleucine 208 lie on the Extracellular side of the membrane. Residues phenylalanine 209–valine 231 traverse the membrane as a helical segment. Residues leucine 232–isoleucine 283 lie on the Cytoplasmic side of the membrane.

Belongs to the connexin family. Alpha-type (group II) subfamily. As to quaternary structure, a connexon is composed of a hexamer of connexins.

Its subcellular location is the cell membrane. It localises to the cell junction. The protein resides in the gap junction. Functionally, one gap junction consists of a cluster of closely packed pairs of transmembrane channels, the connexons, through which materials of low MW diffuse from one cell to a neighboring cell. The protein is Gap junction alpha-6 protein (Gja6) of Mus musculus (Mouse).